A 476-amino-acid chain; its full sequence is Proline--tRNA ligase 2 (476 aa).

Belongs to the class-II aminoacyl-tRNA synthetase family. ProS type 3 subfamily. As to quaternary structure, homodimer.

Its subcellular location is the cytoplasm. The catalysed reaction is tRNA(Pro) + L-proline + ATP = L-prolyl-tRNA(Pro) + AMP + diphosphate. In terms of biological role, catalyzes the attachment of proline to tRNA(Pro) in a two-step reaction: proline is first activated by ATP to form Pro-AMP and then transferred to the acceptor end of tRNA(Pro). The sequence is that of Proline--tRNA ligase 2 from Bacillus thuringiensis (strain Al Hakam).